The following is a 492-amino-acid chain: MKKTRDNPCDKIELGNKTSQKGVSLVKKHIFEDIILQNALNFTEEVVEIFGDLLNKGMNITELVARIKELTDKLGRGAIEAIIEELDRIIKEDKRRKEKWVVERKDKKRLTTVLGDIEYERTYYKSKEDGRYTYLVDDALEIGRHDRIEKGVKIKLVENAIEESYERSSKKACPEELSKQTVLNAIREIGEVEVKREIKEKKEVRVLYIEADEDHVPLQDGRDETPRLVYIHEGREEKNGRNVLKNVYYKAYVGEKPEDIWIDVANYIEDNYKEEKIEKIYIAGDGAPWIKEGLKWILKSRFVLDRYHLNKYVLKATSKEPKYRDKIWRAINEGDKERVKKVFDELIKAAEEEREKEKIKEAKKYILNNWEGIKIYNEDEDVIGCSAEGHISHVFSARLSRNPLGWSREGLKLMAKLRVFSKNGGDLREVEWGKKKNINAGSYKLTKKQIKEAVRRVKTSTNEKINNITVLNIGKVTPIYRVLRALKYAQVI.

The protein belongs to the UPF0236 family.

This Caldanaerobacter subterraneus subsp. tengcongensis (strain DSM 15242 / JCM 11007 / NBRC 100824 / MB4) (Thermoanaerobacter tengcongensis) protein is UPF0236 protein TTE1650/TTE2708.